The following is a 386-amino-acid chain: 17-hydroxy-3-oxo-4-pregnene-20-carboxyl-CoA lyase (386 aa).

The Proton acceptor role is filled by Y292. The Proton donor role is filled by Y342.

This sequence belongs to the thiolase-like superfamily. In terms of assembly, homodimer. Interacts with the ChsH1/ChsH2 hydratase via the DUF35 C-terminal region of ChsH2 (ChsH2-DUF35). The ChsH1-ChsH2-Ltp2 protein complex is composed of two protomers that form a heterohexameric structure through the Ltp2 dimerization interface.

It catalyses the reaction 17-hydroxy-3-oxochol-4-en-22-oyl-CoA = androst-4-ene-3,17-dione + propanoyl-CoA. It functions in the pathway steroid metabolism; cholesterol degradation. In terms of biological role, involved in cholesterol side chain degradation. When associated with the ChsH1/ChsH2 hydratase, catalyzes the retroaldol cleavage of 17-hydroxy-3-oxo-4-pregnene-20-carboxyl-CoA (17-HOPC-CoA) produced by the hydratase, forming androst-4-ene-3,17-dione and propionyl-CoA. The protein is 17-hydroxy-3-oxo-4-pregnene-20-carboxyl-CoA lyase of Mycobacterium tuberculosis (strain ATCC 25618 / H37Rv).